A 131-amino-acid chain; its full sequence is MTDPIADYLTRLRNAIKAKHKIVEIPASNLKKEITKILCNKGYIWDYRFIEDKHQGKIKIAMKYSNINKVNAIKVLKRISKPGLRKYTSYRKMSRVLNGLGIAILSTSKGVMTDKEARDLKIGGEVLCYIY.

It belongs to the universal ribosomal protein uS8 family. In terms of assembly, part of the 30S ribosomal subunit. Contacts proteins S5 and S12.

Functionally, one of the primary rRNA binding proteins, it binds directly to 16S rRNA central domain where it helps coordinate assembly of the platform of the 30S subunit. This chain is Small ribosomal subunit protein uS8, found in Azobacteroides pseudotrichonymphae genomovar. CFP2.